Reading from the N-terminus, the 159-residue chain is Biogenesis of lysosome-related organelles complex 1 subunit 2 (159 aa).

Positions 1–37 (MDKPTTSAAAAAAQDSNLLPDSPQHGPTLSSASSFEA) are disordered. Residues 14–36 (QDSNLLPDSPQHGPTLSSASSFE) show a composition bias toward polar residues. Residues 69-134 (EDYKLLEEMN…KLEAAAYKLD (66 aa)) adopt a coiled-coil conformation.

The protein belongs to the BLOC1S2 family. In terms of assembly, homodimer. Component of the biogenesis of lysosome-related organelles complex-1 (BLOC-1) composed of Blos1, Blos2, Blos3, Blos4, Dysb, Muted, Pldn and Snapin. Interacts with Snapin.

Functionally, component of the biogenesis of lysosome-related organelles complex-1 (BLOC-1) involved in pigment granule biogenesis. This chain is Biogenesis of lysosome-related organelles complex 1 subunit 2, found in Drosophila melanogaster (Fruit fly).